The sequence spans 210 residues: Fimbriae Z protein (210 aa).

Positions Ser5–Leu121 constitute a Response regulatory domain. Asp56 is modified (4-aspartylphosphate). Residues Gly143–Glu208 enclose the HTH luxR-type domain. Residues Asn167 to Ala186 constitute a DNA-binding region (H-T-H motif).

The protein localises to the cytoplasm. In Salmonella typhimurium (strain LT2 / SGSC1412 / ATCC 700720), this protein is Fimbriae Z protein (fimZ).